We begin with the raw amino-acid sequence, 289 residues long: Probable porphobilinogen deaminase (289 aa).

S-(dipyrrolylmethanemethyl)cysteine is present on Cys233.

This sequence belongs to the HMBS family. Dipyrromethane serves as cofactor.

It catalyses the reaction 4 porphobilinogen + H2O = hydroxymethylbilane + 4 NH4(+). The protein operates within porphyrin-containing compound metabolism; protoporphyrin-IX biosynthesis; coproporphyrinogen-III from 5-aminolevulinate: step 2/4. Its function is as follows. Tetrapolymerization of the monopyrrole PBG into the hydroxymethylbilane pre-uroporphyrinogen in several discrete steps. The chain is Probable porphobilinogen deaminase (hemC) from Methanothermobacter thermautotrophicus (strain ATCC 29096 / DSM 1053 / JCM 10044 / NBRC 100330 / Delta H) (Methanobacterium thermoautotrophicum).